We begin with the raw amino-acid sequence, 1076 residues long: Regulator of G-protein signaling protein-like (1076 aa).

The region spanning Asn645 to Glu764 is the RGS domain. The segment covering Thr834–Ser852 has biased composition (polar residues). The disordered stretch occupies residues Thr834–Asp854. The chain crosses the membrane as a helical span at residues Val960–Trp982.

The protein localises to the membrane. The polypeptide is Regulator of G-protein signaling protein-like (RGSL1) (Homo sapiens (Human)).